Here is a 707-residue protein sequence, read N- to C-terminus: D-(-)-3-hydroxybutyrate oligomer hydrolase (707 aa).

The signal sequence occupies residues 1–24; that stretch reads MHHDNFRRLGNAAFAAAAALLAVA. Ser311 (charge relay system) is an active-site residue.

It belongs to the D-(-)-3-hydroxybutyrate oligomer hydrolase family.

The protein resides in the secreted. It catalyses the reaction (3R)-hydroxybutanoate dimer + H2O = 2 (R)-3-hydroxybutanoate + H(+). It participates in lipid metabolism; butanoate metabolism. Functionally, participates in the degradation of poly-3-hydroxybutyrate (PHB). It works downstream of poly(3-hydroxybutyrate) depolymerase, hydrolyzing D(-)-3-hydroxybutyrate oligomers of various length (3HB-oligomers) into 3HB-monomers. The sequence is that of D-(-)-3-hydroxybutyrate oligomer hydrolase from Cupriavidus pinatubonensis (strain JMP 134 / LMG 1197) (Cupriavidus necator (strain JMP 134)).